A 317-amino-acid chain; its full sequence is MFVFIAKLLIFSSVITSAFTCYQCFIDENDSRRLCLGHILTEYNVRNVDSCYKTLDRIFNNEEKVIEAGKVGRGYDLTLKNILMAEIMPIVEEFDQQLNYDTEYESRLQAAANNFIAAASSLPRVSGCLPPCGFQVQGAVYNCVTCQYDSCEFPLDCPGKEITVQENNRTQMWCSVPFLLPADVEIVWRYAQDRTMLRERFDDVTVGVDPLYSIPSARPEQSGTYQCEVLSQEQSLVRLYFYLTVVPVAQTYHVHLQDLCAQALRPEPQFPPSFSFWLPRPALLITCLTATMLLIFLSLGAMCRLWYQIRTNVSNPA.

Residues 1 to 18 form the signal peptide; it reads MFVFIAKLLIFSSVITSA. At 19 to 281 the chain is on the extracellular side; it reads FTCYQCFIDE…PSFSFWLPRP (263 aa). Cystine bridges form between cysteine 21–cysteine 143, cysteine 24–cysteine 146, cysteine 35–cysteine 51, cysteine 128–cysteine 151, and cysteine 132–cysteine 157. Asparagine 29 carries N-linked (GlcNAc...) asparagine glycosylation. In terms of domain architecture, Ig-like spans 123–237; the sequence is PRVSGCLPPC…EVLSQEQSLV (115 aa). An N-linked (GlcNAc...) asparagine glycan is attached at asparagine 168. A disulfide bond links cysteine 174 and cysteine 227. The chain crosses the membrane as a helical span at residues 282–302; that stretch reads ALLITCLTATMLLIFLSLGAM. Over 303-317 the chain is Cytoplasmic; sequence CRLWYQIRTNVSNPA.

It belongs to the SPACA6 family. As to quaternary structure, forms a complex with izumo1 and tmem81 on spermatocyte cell membrane. The complex binds to oocyte protein bncr. Expressed in testis.

It is found in the cytoplasmic vesicle. It localises to the secretory vesicle. Its subcellular location is the acrosome membrane. In terms of biological role, sperm protein required for fusion of sperm with the egg membrane during fertilization. May regulate the expression of sperm surface protein DCST2. The protein is Sperm acrosome membrane-associated protein 6 of Danio rerio (Zebrafish).